The following is a 327-amino-acid chain: Malate dehydrogenase (327 aa).

Residue 12-18 (GAAGQIG) coordinates NAD(+). The substrate site is built by Arg-93 and Arg-99. NAD(+) is bound by residues Asn-106, Gln-113, and 130–132 (VGN). Substrate is bound by residues Asn-132 and Arg-163. The active-site Proton acceptor is the His-188.

The protein belongs to the LDH/MDH superfamily. MDH type 2 family.

It catalyses the reaction (S)-malate + NAD(+) = oxaloacetate + NADH + H(+). Functionally, catalyzes the reversible oxidation of malate to oxaloacetate. This is Malate dehydrogenase from Paraburkholderia phymatum (strain DSM 17167 / CIP 108236 / LMG 21445 / STM815) (Burkholderia phymatum).